Consider the following 577-residue polypeptide: Maltase A1 (577 aa).

Residues 1–19 (MRPQSAACLLLAIVGFVGA) form the signal peptide. N-linked (GlcNAc...) asparagine glycans are attached at residues asparagine 119 and asparagine 151. Aspartate 221 functions as the Nucleophile in the catalytic mechanism. Asparagine 244 is a glycosylation site (N-linked (GlcNAc...) asparagine). The active-site Proton donor is glutamate 297. Residues asparagine 315 and asparagine 331 are each glycosylated (N-linked (GlcNAc...) asparagine).

It belongs to the glycosyl hydrolase 13 family.

It carries out the reaction Hydrolysis of terminal, non-reducing (1-&gt;4)-linked alpha-D-glucose residues with release of alpha-D-glucose.. The chain is Maltase A1 (Mal-A1) from Drosophila melanogaster (Fruit fly).